Here is a 407-residue protein sequence, read N- to C-terminus: MMVFAFWKVFLILNCLAGQVSMVQVTIPDTFVNVTVGSNVTLLCLYTTTEKSLEKLSIQWSFFHNKEMEEPISIYYSEGGQASAIGQFKDRIIGATNPGNASITILHMQPADSGIYICDVNNPPHFVGKNQGLLDVTVLVKPSKPFCTIQGRPEAGHPISLSCLSAFGTPSPLYYWYNIEGNTIVPVKESFNTATGVLVIGNLTNFEQGYYQCTAINSLGNSSCEIDLTSSHPEVGIIIGALVGALIGAAVIICVVYFARNKVKSKQQKNLNSSTELEPMTKVHHPQQSEAISADGVQLEGTLPSSIHAGHNTEPTTTAVLEPEYEPNPPLETTTQPDPEPEGSVPVLAPEAEIQPHPELDPETETEPEPEPEPKPEPEPEPELEPDPQSGVIIEPLSKAGEDTVKA.

An N-terminal signal peptide occupies residues methionine 1–methionine 22. Residues valine 23–leucine 134 form the Ig-like V-type domain. At valine 23–glutamate 234 the chain is on the extracellular side. Asparagine 39 is a glycosylation site (N-linked (GlcNAc...) asparagine). Intrachain disulfides connect cysteine 44–cysteine 118 and cysteine 163–cysteine 213. The region spanning proline 145 to threonine 229 is the Ig-like C2-type domain. N-linked (GlcNAc...) asparagine glycosylation is found at asparagine 202 and asparagine 221. The chain crosses the membrane as a helical span at residues valine 235–valine 255. Residues valine 256–alanine 407 lie on the Cytoplasmic side of the membrane. 2 disordered regions span residues glutamine 268–serine 289 and threonine 318–alanine 407. Phosphoserine is present on residues serine 273 and serine 274. The span at aspartate 361–glutamate 371 shows a compositional bias: acidic residues.

The protein localises to the membrane. The chain is V-set and immunoglobulin domain-containing protein 1 (Vsig1) from Mus musculus (Mouse).